An 86-amino-acid chain; its full sequence is Antimicrobial peptide 2 (86 aa).

An N-terminal signal peptide occupies residues 1–25 (MVNMKCVALIVIVMMAFMMVDPSMG). 3 disulfide bridges follow: C29-C40, C34-C46, and C39-C53. The region spanning 29–53 (CVRGRCPSGMCCSQFGYCGKGPKYC) is the Chitin-binding type-1 domain. Positions 56 to 86 (ASTTVDHQADVAATKTAKNPTDAKLAGAGSP) are cleaved as a propeptide — removed in mature form.

In terms of assembly, homodimer.

Chitin-binding protein with a defensive function against numerous chitin containing fungal pathogens. It is also a potent inhibitor of Gram-positive bacteria. The chain is Antimicrobial peptide 2 from Amaranthus caudatus (Love-lies-bleeding).